The chain runs to 243 residues: MLIEHEVAFVLHVRPWRETSLLVEVLTQAYGRLGLIARGVQGLKKQTLRAALQPLQWIRFSAIQRGELGQLRQAEALDTAPRLKGETMLASFYINELLLRLVPRHAPVNELYLAYSQTRERLRTNDSLAWSLRLFELDILETLGVGFNLECDANGTPLDPAARYVLDPLEGPRLLLSEHNNAERRDTATGHVLLALAHKQIPNTNDLAGLRRSMRAVLLHHLGGRGLKSWEMIAAFRHQDTSP.

Belongs to the RecO family.

In terms of biological role, involved in DNA repair and RecF pathway recombination. The protein is DNA repair protein RecO of Xylella fastidiosa (strain M23).